Reading from the N-terminus, the 455-residue chain is Trigger factor (455 aa).

One can recognise a PPIase FKBP-type domain in the interval 169–262 (GDVAIVDYEG…VKELKAKELP (94 aa)).

This sequence belongs to the FKBP-type PPIase family. Tig subfamily.

It is found in the cytoplasm. It catalyses the reaction [protein]-peptidylproline (omega=180) = [protein]-peptidylproline (omega=0). Its function is as follows. Involved in protein export. Acts as a chaperone by maintaining the newly synthesized protein in an open conformation. Functions as a peptidyl-prolyl cis-trans isomerase. This Rippkaea orientalis (strain PCC 8801 / RF-1) (Cyanothece sp. (strain PCC 8801)) protein is Trigger factor.